Reading from the N-terminus, the 324-residue chain is Ribonucleoside-diphosphate reductase subunit beta nrdF2 (324 aa).

Residues Glu103 and His106 each contribute to the Fe cation site. Tyr110 is an active-site residue. The Fe cation site is built by Glu163, Glu197, and His200.

This sequence belongs to the ribonucleoside diphosphate reductase small chain family. Tetramer of two alpha and two beta subunits. Requires Fe cation as cofactor.

It catalyses the reaction a 2'-deoxyribonucleoside 5'-diphosphate + [thioredoxin]-disulfide + H2O = a ribonucleoside 5'-diphosphate + [thioredoxin]-dithiol. In terms of biological role, provides the precursors necessary for DNA synthesis. Catalyzes the biosynthesis of deoxyribonucleotides from the corresponding ribonucleotides. The chain is Ribonucleoside-diphosphate reductase subunit beta nrdF2 (nrdF2) from Mycobacterium tuberculosis (strain CDC 1551 / Oshkosh).